Reading from the N-terminus, the 2168-residue chain is Genome polyprotein (2168 aa).

Residues 1–20 (MGMQMSKNTAGSHTTVTQAS) form a disordered region. Residue Gly-2 is the site of N-myristoyl glycine; by host attachment. The Cytoplasmic portion of the chain corresponds to 2–1479 (GMQMSKNTAG…NVSIATTILS (1478 aa)). Amphipathic alpha-helix regions lie at residues 551–567 (ALQA…ISSV) and 554–575 (APVE…TAQD). The segment covering 576–589 (TQPSSHNISTSETP) has biased composition (polar residues). Residues 576–607 (TQPSSHNISTSETPALQAAETGASSNASDEGM) form a disordered region. Residues His-856 and Asp-874 each act as for protease 2A activity in the active site. Residues Cys-891 and Cys-893 each contribute to the Zn(2+) site. The active-site For protease 2A activity is the Cys-945. Zn(2+) contacts are provided by Cys-951 and His-953. Positions 1085–1157 (GDDWLKKFTS…EHSCPTTEQQ (73 aa)) are membrane-binding. The oligomerization stretch occupies residues 1085–1223 (GDDWLKKFTS…TAGTGKSLAT (139 aa)). The interval 1106–1110 (AEKIM) is RNA-binding. Residues 1189–1347 (EKRILGYIQF…YKTHNGTLDV (159 aa)) enclose the SF3 helicase domain. Zn(2+)-binding residues include Cys-1354, Cys-1365, and Cys-1370. A C4-type; degenerate zinc finger spans residues 1354–1370 (CEDCCPANFKTCMPLIC). An RNA-binding region spans residues 1397 to 1404 (EWKRRNQV). The oligomerization stretch occupies residues 1408–1413 (YVRLFQ). An intramembrane segment occupies 1480-1495 (SLVLLTSVITLVYLVY). Residues 1496 to 2168 (RLFAGYQGPY…SLLREWYEKF (673 aa)) are Cytoplasmic-facing. O-(5'-phospho-RNA)-tyrosine is present on Tyr-1505. A Peptidase C3 domain is found at 1525–1703 (GPLMDFGVGM…FCAALKRSYF (179 aa)). Active-site for protease 3C activity residues include His-1564, Glu-1595, and Cys-1671. Positions 1934–2048 (GELFGFDYTA…ASYPYRIDPA (115 aa)) constitute a RdRp catalytic domain. 2 residues coordinate Mg(2+): Asp-1940 and Asp-2035.

This sequence belongs to the picornaviruses polyprotein family. In terms of assembly, interacts with capsid protein VP1 and capsid protein VP3 to form heterotrimeric protomers. Interacts with capsid protein VP0, and capsid protein VP3 to form heterotrimeric protomers. Five protomers subsequently associate to form pentamers which serve as building blocks for the capsid. Interacts with capsid protein VP2, capsid protein VP3 and capsid protein VP4 following cleavage of capsid protein VP0. As to quaternary structure, interacts with capsid protein VP1 and capsid protein VP3 in the mature capsid. In terms of assembly, interacts with capsid protein VP0 and capsid protein VP1 to form heterotrimeric protomers. Five protomers subsequently associate to form pentamers which serve as building blocks for the capsid. Interacts with capsid protein VP4 in the mature capsid. Interacts with protein 2C; this interaction may be important for virion morphogenesis. Interacts with capsid protein VP1 and capsid protein VP3. As to quaternary structure, homodimer. In terms of assembly, homohexamer; forms a hexameric ring structure with 6-fold symmetry characteristic of AAA+ ATPases. Interacts (via N-terminus) with host RTN3 (via reticulon domain); this interaction is important for viral replication. Interacts with capsid protein VP3; this interaction may be important for virion morphogenesis. Interacts with protein 3CD. As to quaternary structure, homodimer. Interacts with host GBF1. Interacts (via GOLD domain) with host ACBD3 (via GOLD domain); this interaction allows the formation of a viral protein 3A/ACBD3 heterotetramer with a 2:2 stoichiometry, which will stimulate the recruitment of host PI4KB in order to synthesize PI4P at the viral RNA replication sites. In terms of assembly, interacts with RNA-directed RNA polymerase. Interacts with protein 3AB and with RNA-directed RNA polymerase. As to quaternary structure, interacts with Viral protein genome-linked and with protein 3CD. The cofactor is Mg(2+). Post-translationally, specific enzymatic cleavages in vivo by the viral proteases yield processing intermediates and the mature proteins. In terms of processing, myristoylation is required for the formation of pentamers during virus assembly. Further assembly of 12 pentamers and a molecule of genomic RNA generates the provirion. During virion maturation, immature virions are rendered infectious following cleavage of VP0 into VP4 and VP2. This maturation seems to be an autocatalytic event triggered by the presence of RNA in the capsid and it is followed by a conformational change infectious virion. Post-translationally, myristoylation is required during RNA encapsidation and formation of the mature virus particle. In terms of processing, VPg is uridylylated by the polymerase into VPg-pUpU. This acts as a nucleotide-peptide primer for the genomic RNA replication.

The protein localises to the virion. It is found in the host cytoplasm. Its subcellular location is the host cytoplasmic vesicle membrane. It localises to the host nucleus. It catalyses the reaction a ribonucleoside 5'-triphosphate + H2O = a ribonucleoside 5'-diphosphate + phosphate + H(+). The catalysed reaction is Selective cleavage of Tyr-|-Gly bond in the picornavirus polyprotein.. It carries out the reaction RNA(n) + a ribonucleoside 5'-triphosphate = RNA(n+1) + diphosphate. The enzyme catalyses Selective cleavage of Gln-|-Gly bond in the poliovirus polyprotein. In other picornavirus reactions Glu may be substituted for Gln, and Ser or Thr for Gly.. Its activity is regulated as follows. Replication or transcription is subject to high level of random mutations by the nucleotide analog ribavirin. Functionally, forms an icosahedral capsid of pseudo T=3 symmetry with capsid proteins VP2 and VP3. The capsid is 300 Angstroms in diameter, composed of 60 copies of each capsid protein and enclosing the viral positive strand RNA genome. Capsid protein VP1 mainly forms the vertices of the capsid. Capsid protein VP1 interacts with host cell receptor to provide virion attachment to target host cells. This attachment induces virion internalization. Tyrosine kinases are probably involved in the entry process. After binding to its receptor, the capsid undergoes conformational changes. Capsid protein VP1 N-terminus (that contains an amphipathic alpha-helix) and capsid protein VP4 are externalized. Together, they shape a pore in the host membrane through which viral genome is translocated to host cell cytoplasm. Its function is as follows. Forms an icosahedral capsid of pseudo T=3 symmetry with capsid proteins VP2 and VP3. The capsid is 300 Angstroms in diameter, composed of 60 copies of each capsid protein and enclosing the viral positive strand RNA genome. In terms of biological role, lies on the inner surface of the capsid shell. After binding to the host receptor, the capsid undergoes conformational changes. Capsid protein VP4 is released, Capsid protein VP1 N-terminus is externalized, and together, they shape a pore in the host membrane through which the viral genome is translocated into the host cell cytoplasm. Component of immature procapsids, which is cleaved into capsid proteins VP4 and VP2 after maturation. Allows the capsid to remain inactive before the maturation step. Functionally, cysteine protease that cleaves viral polyprotein and specific host proteins. It is responsible for the autocatalytic cleavage between the P1 and P2 regions, which is the first cleavage occurring in the polyprotein. Also cleaves the host translation initiation factor EIF4G1, in order to shut down the capped cellular mRNA translation. Inhibits the host nucleus-cytoplasm protein and RNA trafficking by cleaving host members of the nuclear pores. Counteracts stress granule formation probably by antagonizing its assembly or promoting its dissassembly. Its function is as follows. Plays an essential role in the virus replication cycle by acting as a viroporin. Creates a pore in the host endoplasmic reticulum and as a consequence releases Ca2+ in the cytoplasm of infected cell. In turn, high levels of cytoplasmic calcium may trigger membrane trafficking and transport of viral ER-associated proteins to viroplasms, sites of viral genome replication. In terms of biological role, induces and associates with structural rearrangements of intracellular membranes. Displays RNA-binding, nucleotide binding and NTPase activities. May play a role in virion morphogenesis and viral RNA encapsidation by interacting with the capsid protein VP3. Localizes the viral replication complex to the surface of membranous vesicles. Together with protein 3CD binds the Cis-Active RNA Element (CRE) which is involved in RNA synthesis initiation. Acts as a cofactor to stimulate the activity of 3D polymerase, maybe through a nucleid acid chaperone activity. Functionally, localizes the viral replication complex to the surface of membranous vesicles. It inhibits host cell endoplasmic reticulum-to-Golgi apparatus transport and causes the disassembly of the Golgi complex, possibly through GBF1 interaction. This would result in depletion of MHC, trail receptors and IFN receptors at the host cell surface. Plays an essential role in viral RNA replication by recruiting ACBD3 and PI4KB at the viral replication sites, thereby allowing the formation of the rearranged membranous structures where viral replication takes place. Its function is as follows. Acts as a primer for viral RNA replication and remains covalently bound to viral genomic RNA. VPg is uridylylated prior to priming replication into VPg-pUpU. The oriI viral genomic sequence may act as a template for this. The VPg-pUpU is then used as primer on the genomic RNA poly(A) by the RNA-dependent RNA polymerase to replicate the viral genome. During genome replication, the VPg-RNA linkage is removed by the host TDP2, thereby accelerating replication. During the late stage of the replication cycle, host TDP2 is excluded from sites of viral RNA synthesis and encapsidation, allowing for the generation of progeny virions. In terms of biological role, involved in the viral replication complex and viral polypeptide maturation. It exhibits protease activity with a specificity and catalytic efficiency that is different from protease 3C. Protein 3CD lacks polymerase activity. Protein 3CD binds to the 5'UTR of the viral genome. Replicates the viral genomic RNA on the surface of intracellular membranes. May form linear arrays of subunits that propagate along a strong head-to-tail interaction called interface-I. Covalently attaches UMP to a tyrosine of VPg, which is used to prime RNA synthesis. The positive stranded RNA genome is first replicated at virus induced membranous vesicles, creating a dsRNA genomic replication form. This dsRNA is then used as template to synthesize positive stranded RNA genomes. ss(+)RNA genomes are either translated, replicated or encapsidated. Functionally, major viral protease that mediates proteolytic processing of the polyprotein. Cleaves host EIF5B, contributing to host translation shutoff. Also cleaves host PABPC1, contributing to host translation shutoff. Cleaves host NLRP1, triggers host N-glycine-mediated degradation of the autoinhibitory NLRP1 N-terminal fragment. The sequence is that of Genome polyprotein from Sus scrofa (Pig).